A 190-amino-acid polypeptide reads, in one-letter code: Peptide deformylase (190 aa).

Fe cation-binding residues include Cys94 and His136. Residue Glu137 is part of the active site. His140 provides a ligand contact to Fe cation.

The protein belongs to the polypeptide deformylase family. It depends on Fe(2+) as a cofactor.

It catalyses the reaction N-terminal N-formyl-L-methionyl-[peptide] + H2O = N-terminal L-methionyl-[peptide] + formate. Removes the formyl group from the N-terminal Met of newly synthesized proteins. Requires at least a dipeptide for an efficient rate of reaction. N-terminal L-methionine is a prerequisite for activity but the enzyme has broad specificity at other positions. In Chlorobium luteolum (strain DSM 273 / BCRC 81028 / 2530) (Pelodictyon luteolum), this protein is Peptide deformylase.